The primary structure comprises 241 residues: Endo-chitosanase B (241 aa).

Residues 1-17 (MRLSEILAVALVTGATA) form the signal peptide. Asparagine 86 carries an N-linked (GlcNAc...) asparagine glycan.

The protein belongs to the glycosyl hydrolase 75 family.

It localises to the secreted. The enzyme catalyses Endohydrolysis of beta-(1-&gt;4)-linkages between D-glucosamine residues in a partly acetylated chitosan.. Functionally, chitosanase catalyzing the endo-type cleavage of chitosan, the deacylated form of chitin. Chitosanase may be crucial in the degradation of the deacetylated portion of chitin in the fungal cell wall. Chitoolisaccharides produced by the hydrolysis of partially N-acetylated chitosan are known to have many biological activities, including antibacterial activity, immune-enhancing effects, and elicitor activity. In Aspergillus oryzae (strain ATCC 42149 / RIB 40) (Yellow koji mold), this protein is Endo-chitosanase B (csnB).